A 590-amino-acid chain; its full sequence is Aspartate--tRNA ligase (590 aa).

E172 lines the L-aspartate pocket. The interval 196 to 199 is aspartate; that stretch reads QLFK. R218 provides a ligand contact to L-aspartate. ATP contacts are provided by residues 218-220 and Q227; that span reads RDE. H449 is an L-aspartate binding site. Position 483 (E483) interacts with ATP. R490 contributes to the L-aspartate binding site. 535–538 is a binding site for ATP; the sequence is GLDR.

Belongs to the class-II aminoacyl-tRNA synthetase family. Type 1 subfamily. As to quaternary structure, homodimer.

It is found in the cytoplasm. It catalyses the reaction tRNA(Asp) + L-aspartate + ATP = L-aspartyl-tRNA(Asp) + AMP + diphosphate. In terms of biological role, catalyzes the attachment of L-aspartate to tRNA(Asp) in a two-step reaction: L-aspartate is first activated by ATP to form Asp-AMP and then transferred to the acceptor end of tRNA(Asp). In Glaesserella parasuis serovar 5 (strain SH0165) (Haemophilus parasuis), this protein is Aspartate--tRNA ligase.